The chain runs to 345 residues: UDP-N-acetylenolpyruvoylglucosamine reductase (345 aa).

Residues 16-186 enclose the FAD-binding PCMH-type domain; the sequence is LPAYASNVIS…VSVGIKLMKS (171 aa). Residue arginine 162 is part of the active site. Serine 232 acts as the Proton donor in catalysis. Glutamate 328 is a catalytic residue.

It belongs to the MurB family. It depends on FAD as a cofactor.

It localises to the cytoplasm. It catalyses the reaction UDP-N-acetyl-alpha-D-muramate + NADP(+) = UDP-N-acetyl-3-O-(1-carboxyvinyl)-alpha-D-glucosamine + NADPH + H(+). It participates in cell wall biogenesis; peptidoglycan biosynthesis. Cell wall formation. This is UDP-N-acetylenolpyruvoylglucosamine reductase from Yersinia pestis.